A 621-amino-acid chain; its full sequence is Glutamine--fructose-6-phosphate aminotransferase [isomerizing] (621 aa).

Cysteine 2 (nucleophile; for GATase activity) is an active-site residue. The Glutamine amidotransferase type-2 domain maps to 2–223; the sequence is CGIIGYVGEG…DRELGIISIS (222 aa). SIS domains lie at 289-436 and 470-611; these read LHLE…HKFT and LSKQ…IDKP. Lysine 616 (for Fru-6P isomerization activity) is an active-site residue.

Homodimer.

Its subcellular location is the plastid. The protein localises to the chloroplast. The catalysed reaction is D-fructose 6-phosphate + L-glutamine = D-glucosamine 6-phosphate + L-glutamate. Functionally, catalyzes the first step in hexosamine metabolism, converting fructose-6P into glucosamine-6P using glutamine as a nitrogen source. The protein is Glutamine--fructose-6-phosphate aminotransferase [isomerizing] of Cyanidium caldarium (Red alga).